The following is a 2346-amino-acid chain: Acetyl-CoA carboxylase 1 (2346 aa).

Residue Met1 is modified to N-acetylmethionine. 8 positions are modified to phosphoserine: Ser5, Ser23, Ser25, Ser29, Ser34, Ser48, Ser50, and Ser53. At Thr58 the chain carries Phosphothreonine. Residues Ser78 and Ser80 each carry the phosphoserine modification. Residues 117 to 618 (VIEKVLIANN…DTGWLDRLIA (502 aa)) enclose the Biotin carboxylation domain. In terms of domain architecture, ATP-grasp spans 275 to 466 (SKRILNVPQE…LPAAQLQIAM (192 aa)). Residue 315 to 320 (GGGGKG) participates in ATP binding. 3 residues coordinate Mg(2+): Glu424, Glu437, and Asn439. Mn(2+) contacts are provided by Glu424, Glu437, and Asn439. Arg441 is an active-site residue. A Phosphoserine modification is found at Ser488. Position 610 is a phosphothreonine (Thr610). The region spanning 745–819 (FEKENDPSVM…DPGCVLAKMQ (75 aa)) is the Biotinyl-binding domain. N6-biotinyllysine is present on Lys786. A phosphoserine mark is found at Ser835, Ser1201, Ser1216, and Ser1218. Thr1227 carries the phosphothreonine modification. A phosphoserine mark is found at Ser1259, Ser1263, and Ser1273. An N6-acetyllysine modification is found at Lys1334. One can recognise a CoA carboxyltransferase N-terminal domain in the interval 1576–1914 (PYVTKDLLQS…SVHSSVPLLN (339 aa)). The interval 1576–2234 (PYVTKDLLQS…EDLVKKKIHN (659 aa)) is carboxyltransferase. CoA is bound by residues Arg1823, Lys2127, and Arg2129. One can recognise a CoA carboxyltransferase C-terminal domain in the interval 1918 to 2234 (PIDRIIEFVP…EDLVKKKIHN (317 aa)). Position 2153 is a phosphothreonine (Thr2153).

Monomer, homodimer, and homotetramer. Can form filamentous polymers. Interacts in its inactive phosphorylated form with the BRCT domains of BRCA1 which prevents ACACA dephosphorylation and inhibits lipid synthesis. Interacts with MID1IP1; interaction with MID1IP1 promotes oligomerization and increases its activity. Mg(2+) serves as cofactor. The cofactor is Mn(2+). It depends on biotin as a cofactor. In terms of processing, phosphorylation on Ser-1263 is required for interaction with BRCA1. Post-translationally, phosphorylation at Ser-80 by AMPK inactivates enzyme activity. The biotin cofactor is covalently attached to the central biotinyl-binding domain and is required for the catalytic activity. In terms of tissue distribution, expressed in brain, placenta, skeletal muscle, renal, pancreatic and adipose tissues; expressed at low level in pulmonary tissue; not detected in the liver.

It localises to the cytoplasm. It is found in the cytosol. The enzyme catalyses hydrogencarbonate + acetyl-CoA + ATP = malonyl-CoA + ADP + phosphate + H(+). It participates in lipid metabolism; malonyl-CoA biosynthesis; malonyl-CoA from acetyl-CoA: step 1/1. With respect to regulation, inhibited by phosphorylation. Citrate promotes oligomerization of the protein into filaments that correspond to the most active form of the carboxylase. Inhibited by palmitoyl-CoA. Its function is as follows. Cytosolic enzyme that catalyzes the carboxylation of acetyl-CoA to malonyl-CoA, the first and rate-limiting step of de novo fatty acid biosynthesis. This is a 2 steps reaction starting with the ATP-dependent carboxylation of the biotin carried by the biotin carboxyl carrier (BCC) domain followed by the transfer of the carboxyl group from carboxylated biotin to acetyl-CoA. The chain is Acetyl-CoA carboxylase 1 from Homo sapiens (Human).